The sequence spans 341 residues: Flap endonuclease 1 (341 aa).

The interval 1 to 98 (MGVQIGELIP…RELEKRREAR (98 aa)) is N-domain. 7 residues coordinate Mg(2+): aspartate 27, aspartate 80, glutamate 152, glutamate 154, aspartate 173, aspartate 175, and aspartate 236. The tract at residues 116–258 (EAKKYAMRAT…KALTIVKRTK (143 aa)) is I-domain. Residues 330–338 (KQSTLESWF) form an interaction with PCNA region.

This sequence belongs to the XPG/RAD2 endonuclease family. FEN1 subfamily. Interacts with PCNA. PCNA stimulates the nuclease activity without altering cleavage specificity. Mg(2+) serves as cofactor.

Its function is as follows. Structure-specific nuclease with 5'-flap endonuclease and 5'-3' exonuclease activities involved in DNA replication and repair. During DNA replication, cleaves the 5'-overhanging flap structure that is generated by displacement synthesis when DNA polymerase encounters the 5'-end of a downstream Okazaki fragment. Binds the unpaired 3'-DNA end and kinks the DNA to facilitate 5' cleavage specificity. Cleaves one nucleotide into the double-stranded DNA from the junction in flap DNA, leaving a nick for ligation. Also involved in the base excision repair (BER) pathway. Acts as a genome stabilization factor that prevents flaps from equilibrating into structures that lead to duplications and deletions. Also possesses 5'-3' exonuclease activity on nicked or gapped double-stranded DNA. This Thermococcus onnurineus (strain NA1) protein is Flap endonuclease 1.